We begin with the raw amino-acid sequence, 320 residues long: Ribose-phosphate pyrophosphokinase 3 (320 aa).

Mg(2+)-binding residues include aspartate 131, histidine 133, aspartate 142, and aspartate 146.

It belongs to the ribose-phosphate pyrophosphokinase family.

Its subcellular location is the cytoplasm. It catalyses the reaction D-ribose 5-phosphate + ATP = 5-phospho-alpha-D-ribose 1-diphosphate + AMP + H(+). It functions in the pathway metabolic intermediate biosynthesis; 5-phospho-alpha-D-ribose 1-diphosphate biosynthesis; 5-phospho-alpha-D-ribose 1-diphosphate from D-ribose 5-phosphate (route I): step 1/1. In terms of biological role, 5-phosphoribose 1-diphosphate synthase involved in nucleotide, histidine, and tryptophan biosynthesis. Active in heteromultimeric complexes with other 5-phosphoribose 1-diphosphate synthases (PRS2, PRS3, PRS4 and PRS5). The chain is Ribose-phosphate pyrophosphokinase 3 (PRS3) from Saccharomyces cerevisiae (strain ATCC 204508 / S288c) (Baker's yeast).